Here is a 277-residue protein sequence, read N- to C-terminus: Large ribosomal subunit protein uL2 (277 aa).

Positions 219 to 277 are disordered; that stretch reads TVRGSVMNPNDHPHGGGEGKAPVGRKAPSTPWGKPALGLKTRNKKAKSDKLIVRRRNQK.

The protein belongs to the universal ribosomal protein uL2 family. In terms of assembly, part of the 50S ribosomal subunit. Forms a bridge to the 30S subunit in the 70S ribosome.

Its function is as follows. One of the primary rRNA binding proteins. Required for association of the 30S and 50S subunits to form the 70S ribosome, for tRNA binding and peptide bond formation. It has been suggested to have peptidyltransferase activity; this is somewhat controversial. Makes several contacts with the 16S rRNA in the 70S ribosome. This chain is Large ribosomal subunit protein uL2, found in Streptococcus suis (strain 98HAH33).